A 433-amino-acid chain; its full sequence is Cyclin-dependent kinase F-3 (433 aa).

Residues 4 to 283 form the Protein kinase domain; sequence YKVIREIGDG…AEQSLQHPFF (280 aa). ATP is bound by residues 10–18 and Lys-33; that span reads IGDGTCGNV. Asp-125 serves as the catalytic Proton acceptor. Ser-151 bears the Phosphoserine mark. Thr-156 carries the post-translational modification Phosphothreonine.

It belongs to the protein kinase superfamily. CMGC Ser/Thr protein kinase family. CDC2/CDKX subfamily.

It carries out the reaction L-seryl-[protein] + ATP = O-phospho-L-seryl-[protein] + ADP + H(+). The enzyme catalyses L-threonyl-[protein] + ATP = O-phospho-L-threonyl-[protein] + ADP + H(+). The catalysed reaction is [DNA-directed RNA polymerase] + ATP = phospho-[DNA-directed RNA polymerase] + ADP + H(+). The sequence is that of Cyclin-dependent kinase F-3 (CDKF-3) from Oryza sativa subsp. japonica (Rice).